A 385-amino-acid chain; its full sequence is SWI/SNF-related matrix-associated actin-dependent regulator of chromatin subfamily B member 1 (385 aa).

Residues 1–113 are DNA-binding; the sequence is MMMMALSKTF…DEKYKAVSIS (113 aa). Glycyl lysine isopeptide (Lys-Gly) (interchain with G-Cter in SUMO2) cross-links involve residues lysine 106, lysine 108, and lysine 124. The residue at position 129 (serine 129) is a Phosphoserine. Lysine 161 participates in a covalent cross-link: Glycyl lysine isopeptide (Lys-Gly) (interchain with G-Cter in SUMO2). Positions 183–243 are HIV-1 integrase-binding; sequence PEVLVPIRLD…VPAIASAIRQ (61 aa). A run of 2 repeats spans residues 186–245 and 259–319. An MYC-binding region spans residues 186–245; sequence LVPIRLDMEIDGQKLRDAFTWNMNEKLMTPEMFSEILCDDLDLNPLTFVPAIASAIRQQI. The segment at 186-319 is 2 X approximate tandem repeats; it reads LVPIRLDMEI…TIAYSIRGQL (134 aa). Residues 304-318 are interaction with PPP1R15A; it reads GGEFVTTIAYSIRGQ.

Belongs to the SNF5 family. As to quaternary structure, component of the multiprotein chromatin-remodeling complexes SWI/SNF: SWI/SNF-A (BAF), SWI/SNF-B (PBAF) and related complexes. The canonical complex contains a catalytic subunit (either SMARCA4/BRG1/BAF190A or SMARCA2/BRM/BAF190B) and at least SMARCE1, ACTL6A/BAF53, SMARCC1/BAF155, SMARCC2/BAF170, and SMARCB1/SNF5/BAF47. Other subunits specific to each of the complexes may also be present permitting several possible combinations developmentally and tissue specific. Component of the BAF complex, which includes at least actin (ACTB), ARID1A/BAF250A, ARID1B/BAF250B, SMARCA2/BRM, SMARCA4/BRG1/BAF190A, ACTL6A/BAF53, ACTL6B/BAF53B, SMARCE1/BAF57 SMARCC1/BAF155, SMARCC2/BAF170, SMARCB1/SNF5/INI1, and one or more SMARCD1/BAF60A, SMARCD2/BAF60B, or SMARCD3/BAF60C. In muscle cells, the BAF complex also contains DPF3. Component of neural progenitors-specific chromatin remodeling complex (npBAF complex) composed of at least, ARID1A/BAF250A or ARID1B/BAF250B, SMARCD1/BAF60A, SMARCD3/BAF60C, SMARCA2/BRM/BAF190B, SMARCA4/BRG1/BAF190A, SMARCB1/BAF47, SMARCC1/BAF155, SMARCE1/BAF57, SMARCC2/BAF170, PHF10/BAF45A, ACTL6A/BAF53A and actin. Component of neuron-specific chromatin remodeling complex (nBAF complex) composed of at least, ARID1A/BAF250A or ARID1B/BAF250B, SMARCD1/BAF60A, SMARCD3/BAF60C, SMARCA2/BRM/BAF190B, SMARCA4/BRG1/BAF190A, SMARCB1/BAF47, SMARCC1/BAF155, SMARCE1/BAF57, SMARCC2/BAF170, DPF1/BAF45B, DPF3/BAF45C, ACTL6B/BAF53B and actin. Component of the SWI/SNF-B (PBAF) chromatin remodeling complex, at least composed of SMARCA4/BRG1, SMARCB1/BAF47/SNF5, ACTL6A/BAF53A or ACTL6B/BAF53B, SMARCE1/BAF57, SMARCD1/BAF60A, SMARCD2/BAF60B, perhaps SMARCD3/BAF60C, SMARCC1/BAF155, SMARCC2/BAF170, PBRM1/BAF180, ARID2/BAF200 and actin. Binds to double-stranded DNA. Interacts with CEBPB (when not methylated). Interacts with PIH1D1. Interacts with MYK and MAEL. Interacts with PPP1R15A. Interacts with DPF2. Interacts with YWHAZ. Interacts with ERCC6. Interacts with FOS, FOSB isoform 1 and 2, FOSL1 and FOSL2. In terms of assembly, (Microbial infection) Binds tightly to the human immunodeficiency virus-type 1 (HIV-1) integrase in vitro and stimulates its DNA-joining activity. Interacts with human papillomavirus 18 E1 protein to stimulate its viral replication. Interacts with Epstein-Barr virus protein EBNA-2.

It localises to the nucleus. Core component of the BAF (hSWI/SNF) complex. This ATP-dependent chromatin-remodeling complex plays important roles in cell proliferation and differentiation, in cellular antiviral activities and inhibition of tumor formation. The BAF complex is able to create a stable, altered form of chromatin that constrains fewer negative supercoils than normal. This change in supercoiling would be due to the conversion of up to one-half of the nucleosomes on polynucleosomal arrays into asymmetric structures, termed altosomes, each composed of 2 histones octamers. Stimulates in vitro the remodeling activity of SMARCA4/BRG1/BAF190A. Involved in activation of CSF1 promoter. Belongs to the neural progenitors-specific chromatin remodeling complex (npBAF complex) and the neuron-specific chromatin remodeling complex (nBAF complex). During neural development a switch from a stem/progenitor to a postmitotic chromatin remodeling mechanism occurs as neurons exit the cell cycle and become committed to their adult state. The transition from proliferating neural stem/progenitor cells to postmitotic neurons requires a switch in subunit composition of the npBAF and nBAF complexes. As neural progenitors exit mitosis and differentiate into neurons, npBAF complexes which contain ACTL6A/BAF53A and PHF10/BAF45A, are exchanged for homologous alternative ACTL6B/BAF53B and DPF1/BAF45B or DPF3/BAF45C subunits in neuron-specific complexes (nBAF). The npBAF complex is essential for the self-renewal/proliferative capacity of the multipotent neural stem cells. The nBAF complex along with CREST plays a role regulating the activity of genes essential for dendrite growth. Plays a key role in cell-cycle control and causes cell cycle arrest in G0/G1. This Homo sapiens (Human) protein is SWI/SNF-related matrix-associated actin-dependent regulator of chromatin subfamily B member 1 (SMARCB1).